A 268-amino-acid polypeptide reads, in one-letter code: Adenosylcobinamide-GDP ribazoletransferase (268 aa).

6 consecutive transmembrane segments (helical) span residues 54–74 (IAGLVIGGILAAVGWGAGVLW), 80–100 (AVVLVVAWGVLTAGMHLDGLS), 124–144 (IGVMGALALAAVLGLKAAFLA), 150–170 (WLTAVVLAPVLGRWADVYGIV), 202–222 (ALALIVGGVGGLIALALVWMV), and 243–263 (GALCEIAEVVALATLTLSAPM).

Belongs to the CobS family. Mg(2+) is required as a cofactor.

It localises to the cell membrane. The catalysed reaction is alpha-ribazole + adenosylcob(III)inamide-GDP = adenosylcob(III)alamin + GMP + H(+). It catalyses the reaction alpha-ribazole 5'-phosphate + adenosylcob(III)inamide-GDP = adenosylcob(III)alamin 5'-phosphate + GMP + H(+). The protein operates within cofactor biosynthesis; adenosylcobalamin biosynthesis; adenosylcobalamin from cob(II)yrinate a,c-diamide: step 7/7. In terms of biological role, joins adenosylcobinamide-GDP and alpha-ribazole to generate adenosylcobalamin (Ado-cobalamin). Also synthesizes adenosylcobalamin 5'-phosphate from adenosylcobinamide-GDP and alpha-ribazole 5'-phosphate. The sequence is that of Adenosylcobinamide-GDP ribazoletransferase from Roseiflexus sp. (strain RS-1).